The chain runs to 476 residues: Serine/threonine-protein kinase Chk1 (476 aa).

The interaction with CLSPN stretch occupies residues 1–265 (MAVPFVEDWD…IPDIKKDRWY (265 aa)). The Protein kinase domain occupies 9-265 (WDLVQTLGEG…IPDIKKDRWY (257 aa)). ATP contacts are provided by residues 15 to 23 (LGEGAYGEV) and Lys38. Asp130 serves as the catalytic Proton acceptor. A Glycyl lysine isopeptide (Lys-Gly) (interchain with G-Cter in ubiquitin) cross-link involves residue Lys132. Residues 267-331 (KPLNRGAKRP…RTGLSLWDTG (65 aa)) are disordered. Position 280 is a phosphoserine; by PKB/AKT1 (Ser280). Residues 280-291 (SGGMSESSSGFS) are compositionally biased toward low complexity. Ser286, Ser296, and Ser301 each carry phosphoserine. Polar residues predominate over residues 298–320 (LDFSPVNNGSSEETVKFSSSQPE). Ser317 bears the Phosphoserine; by ATM and ATR mark. At Ser345 the chain carries Phosphoserine; by ATR. Residues 391–476 (QCLKETFEKL…SSQKVWFPVT (86 aa)) are autoinhibitory region. A Glycyl lysine isopeptide (Lys-Gly) (interchain with G-Cter in ubiquitin) cross-link involves residue Lys436. Residues Ser463, Ser467, and Ser468 each carry the phosphoserine modification.

The protein belongs to the protein kinase superfamily. CAMK Ser/Thr protein kinase family. NIM1 subfamily. As to quaternary structure, interacts (phosphorylated by ATR) with RAD51. Interacts with and phosphorylates CLSPN, an adapter protein that regulates the ATR-dependent phosphorylation of CHEK1. Interacts with BRCA1. Interacts with and phosphorylates CDC25A, CDC25B and CDC25C. Interacts with FBXO6, which regulates CHEK1. Interacts with PPM1D, which regulates CHEK1 through dephosphorylation. Interacts with TIMELESS; DNA damage-dependent. Interacts with FEM1B; activates CHEK1 in response to stress. Interacts with TLK1. Interacts with XPO1 and YWHAZ. Interacts with CDK5RAP3; antagonizes CHEK1. Phosphorylated by ATR in a RAD17-dependent manner in response to ultraviolet irradiation and inhibition of DNA replication. Phosphorylated by ATM in response to ionizing irradiation. ATM and ATR can both phosphorylate Ser-317 and Ser-345 and this results in enhanced kinase activity. Phosphorylation at Ser-345 induces a change in the conformation of the protein, activates the kinase activity and is a prerequisite for interaction with FBXO6 and subsequent ubiquitination at Lys-436. Phosphorylation at Ser-345 also increases binding to 14-3-3 proteins and promotes nuclear retention. Conversely, dephosphorylation at Ser-345 by PPM1D may contribute to exit from checkpoint mediated cell cycle arrest. Phosphorylation at Ser-280 by AKT1/PKB, may promote mono and/or diubiquitination. Also phosphorylated at undefined residues during mitotic arrest, resulting in decreased activity. Post-translationally, ubiquitinated. Mono or diubiquitination promotes nuclear exclusion. The activated form (phosphorylated on Ser-345) is polyubiquitinated at Lys-436 by some SCF-type E3 ubiquitin ligase complex containing FBXO6 promoting its degradation. Ubiquitination and degradation are required to terminate the checkpoint and ensure that activated CHEK1 does not accumulate as cells progress through S phase, when replication forks encounter transient impediments during normal DNA replication. 'Lys-63'-mediated ubiquitination by TRAF4 at Lys-132 activates cell cycle arrest and activation of DNA repair. In terms of processing, proteolytically cleaved at the C-terminus by SPRTN during normal DNA replication, thereby promoting CHEK1 removal from chromatin and activating the protein kinase activity. Found in all adult tissues tested. Elevated expression in testis, lung and spleen. 15.5 day old embryos show ubiquitous expression with strong expression in brain, liver, kidney, pancreas, intestine, thymus and lung.

Its subcellular location is the nucleus. It localises to the chromosome. The protein resides in the cytoplasm. It is found in the cytoskeleton. The protein localises to the microtubule organizing center. Its subcellular location is the centrosome. The enzyme catalyses L-seryl-[protein] + ATP = O-phospho-L-seryl-[protein] + ADP + H(+). It carries out the reaction L-threonyl-[protein] + ATP = O-phospho-L-threonyl-[protein] + ADP + H(+). With respect to regulation, activated through phosphorylation predominantly by ATR but also by ATM in response to DNA damage or inhibition of DNA replication. Activation is modulated by several mediators including CLSPN, BRCA1 and FEM1B. Proteolytic cleavage at the C-terminus by SPRTN during normal DNA replication activates the protein kinase activity. Serine/threonine-protein kinase which is required for checkpoint-mediated cell cycle arrest and activation of DNA repair in response to the presence of DNA damage or unreplicated DNA. May also negatively regulate cell cycle progression during unperturbed cell cycles. This regulation is achieved by a number of mechanisms that together help to preserve the integrity of the genome. Recognizes the substrate consensus sequence [R-X-X-S/T]. Binds to and phosphorylates CDC25A, CDC25B and CDC25C. Phosphorylation of CDC25A at 'Ser-178' and 'Thr-507' and phosphorylation of CDC25C at 'Ser-216' creates binding sites for 14-3-3 proteins which inhibit CDC25A and CDC25C. Phosphorylation of CDC25A at 'Ser-76', 'Ser-124', 'Ser-178', 'Ser-279' and 'Ser-293' promotes proteolysis of CDC25A. Phosphorylation of CDC25A at 'Ser-76' primes the protein for subsequent phosphorylation at 'Ser-79', 'Ser-82' and 'Ser-88' by NEK11, which is required for polyubiquitination and degradation of CDCD25A. Inhibition of CDC25 leads to increased inhibitory tyrosine phosphorylation of CDK-cyclin complexes and blocks cell cycle progression. Also phosphorylates NEK6. Binds to and phosphorylates RAD51 at 'Thr-309', which promotes the release of RAD51 from BRCA2 and enhances the association of RAD51 with chromatin, thereby promoting DNA repair by homologous recombination. Phosphorylates multiple sites within the C-terminus of TP53, which promotes activation of TP53 by acetylation and promotes cell cycle arrest and suppression of cellular proliferation. Also promotes repair of DNA cross-links through phosphorylation of FANCE. Binds to and phosphorylates TLK1 at 'Ser-743', which prevents the TLK1-dependent phosphorylation of the chromatin assembly factor ASF1A. This may enhance chromatin assembly both in the presence or absence of DNA damage. May also play a role in replication fork maintenance through regulation of PCNA. May regulate the transcription of genes that regulate cell-cycle progression through the phosphorylation of histones. Phosphorylates histone H3.1 (to form H3T11ph), which leads to epigenetic inhibition of a subset of genes. May also phosphorylate RB1 to promote its interaction with the E2F family of transcription factors and subsequent cell cycle arrest. Phosphorylates SPRTN, promoting SPRTN recruitment to chromatin. Reduces replication stress and activates the G2/M checkpoint, by phosphorylating and inactivating PABIR1/FAM122A and promoting the serine/threonine-protein phosphatase 2A-mediated dephosphorylation and stabilization of WEE1 levels and activity. The protein is Serine/threonine-protein kinase Chk1 (Chek1) of Mus musculus (Mouse).